A 275-amino-acid chain; its full sequence is Ribosomal RNA small subunit methyltransferase A (275 aa).

S-adenosyl-L-methionine is bound by residues Asn-15, Leu-17, Gly-42, Glu-63, Asp-88, and Asn-111.

Belongs to the class I-like SAM-binding methyltransferase superfamily. rRNA adenine N(6)-methyltransferase family. RsmA subfamily.

The protein localises to the cytoplasm. The catalysed reaction is adenosine(1518)/adenosine(1519) in 16S rRNA + 4 S-adenosyl-L-methionine = N(6)-dimethyladenosine(1518)/N(6)-dimethyladenosine(1519) in 16S rRNA + 4 S-adenosyl-L-homocysteine + 4 H(+). Its function is as follows. Specifically dimethylates two adjacent adenosines (A1518 and A1519) in the loop of a conserved hairpin near the 3'-end of 16S rRNA in the 30S particle. May play a critical role in biogenesis of 30S subunits. In Geobacter metallireducens (strain ATCC 53774 / DSM 7210 / GS-15), this protein is Ribosomal RNA small subunit methyltransferase A.